The chain runs to 868 residues: Probable inorganic carbon transporter subunit DabA (868 aa).

Positions 392, 394, 574, and 589 each coordinate Zn(2+).

This sequence belongs to the inorganic carbon transporter (TC 9.A.2) DabA family. Forms a complex with DabB. Requires Zn(2+) as cofactor.

The protein localises to the cell membrane. Functionally, part of an energy-coupled inorganic carbon pump. The chain is Probable inorganic carbon transporter subunit DabA from Bacillus cereus (strain G9842).